The chain runs to 718 residues: MDFTRDDNSSDERENDVDANTNNRHEKKGYHRHTNEQIHRLETYFKECPHPDEFQRRLLGEELNLKPKQIKFWFQNKRTQAKSHNEKADNAALRAENIKIRRENESMEDALNNVVCPPCGGRGPGREDQLRHLQKLRAQNAYLKDEYERVSNYLKQYGGHSMHNVEATPYLHGPSNHASTSKNRPALYGTSSNRLPEPSSIFRGPYTRGNMNTTAPPQPRKPLEMQNFQPLSQLEKIAMLEAAEKAVSEVLSLIQMDDTMWKKSSIDDRLVIDPGLYEKYFTKTNTNGRPESSKDVVVVQMDAGNLIDIFLTAEKWARLFPTIVNEAKTIHVLDSVDHRGKTFSRVIYEQLHILSPLVPPREFMILRTCQQIEDNVWMIADVSCHLPNIEFDLSFPICTKRPSGVLIQALPHGFSKVTWIEHVVVNDNRVRPHKLYRDLLYGGFGYGARRWTVTLERTCERLIFSTSVPALPNNDNPGVVQTIRGRNSVMHLGERMLRNFAWMMKMVNKLDFSPQSETNNSGIRIGVRINNEAGQPPGLIVCAGSSLSLPLPPVQVYDFLKNLEVRHQWDVLCHGNPATEAARFVTGSNPRNTVSFLEPSIRDINTKLMILQDSFKDALGGMVAYAPMDLNTACAAISGDIDPTTIPILPSGFMISRDGRPSEGEAEGGSYTLLTVAFQILVSGPSYSPDTNLEVSATTVNTLISSTVQRIKAMLKCE.

Over residues 1-12 (MDFTRDDNSSDE) the composition is skewed to basic and acidic residues. The tract at residues 1-35 (MDFTRDDNSSDERENDVDANTNNRHEKKGYHRHTN) is disordered. A DNA-binding region (homeobox) is located at residues 26-85 (EKKGYHRHTNEQIHRLETYFKECPHPDEFQRRLLGEELNLKPKQIKFWFQNKRTQAKSHN). The stretch at 78–152 (RTQAKSHNEK…LKDEYERVSN (75 aa)) forms a coiled coil. Residues 169–209 (PYLHGPSNHASTSKNRPALYGTSSNRLPEPSSIFRGPYTRG) form a disordered region. Residues 176-194 (NHASTSKNRPALYGTSSNR) show a composition bias toward polar residues. Positions 232–464 (SQLEKIAMLE…LERTCERLIF (233 aa)) constitute an START domain.

This sequence belongs to the HD-ZIP homeobox family. Class IV subfamily. As to expression, expressed in anthers with highest levels in the tapetum and pollen grains, and chalazal end of the embryo sac.

Its subcellular location is the nucleus. Probable transcription factor that binds to the DNA sequence 5'-GCATTAAATGCGCA-3'. This is Homeobox-leucine zipper protein HDG9 (HDG9) from Arabidopsis thaliana (Mouse-ear cress).